A 157-amino-acid chain; its full sequence is Transcription elongation factor GreA (157 aa).

It belongs to the GreA/GreB family.

In terms of biological role, necessary for efficient RNA polymerase transcription elongation past template-encoded arresting sites. The arresting sites in DNA have the property of trapping a certain fraction of elongating RNA polymerases that pass through, resulting in locked ternary complexes. Cleavage of the nascent transcript by cleavage factors such as GreA or GreB allows the resumption of elongation from the new 3'terminus. GreA releases sequences of 2 to 3 nucleotides. The polypeptide is Transcription elongation factor GreA (Hyphomonas neptunium (strain ATCC 15444)).